Here is a 217-residue protein sequence, read N- to C-terminus: Zinc finger CCHC-type and RNA-binding motif-containing protein 1 (217 aa).

The region spanning 10–88 is the RRM domain; that stretch reads STVYVSNLPF…RVIKASIAID (79 aa). The CCHC-type zinc finger occupies 105–122; it reads SKCYECGESGHLSYACPK. The segment at 120–217 is disordered; that stretch reads CPKNMLGERE…YFSDEEELSD (98 aa). The segment covering 145 to 163 has biased composition (acidic residues); sequence PEEEIEEVEVSEEEGEDPA. Phosphoserine occurs at positions 155, 210, and 216.

As to quaternary structure, component of the U11/U12 snRNPs that are part of the U12-type spliceosome. Interacts with ZRSR1.

The protein localises to the nucleus. Its subcellular location is the nucleoplasm. The sequence is that of Zinc finger CCHC-type and RNA-binding motif-containing protein 1 (Zcrb1) from Rattus norvegicus (Rat).